Reading from the N-terminus, the 161-residue chain is Beta-lactoglobulin-2 (161 aa).

Disulfide bonds link C66–C159 and C106–C119.

It belongs to the calycin superfamily. Lipocalin family. As to quaternary structure, monomer. As to expression, synthesized in mammary gland and secreted in milk.

It localises to the secreted. Functionally, primary component of whey, it binds retinol and is probably involved in the transport of that molecule. This is Beta-lactoglobulin-2 (LGB2) from Canis lupus familiaris (Dog).